A 159-amino-acid chain; its full sequence is SsrA-binding protein (159 aa).

Residues 132–159 are disordered; that stretch reads KDFDKRHTEKERDSDREIQRAMRHGKDD.

This sequence belongs to the SmpB family.

It is found in the cytoplasm. Its function is as follows. Required for rescue of stalled ribosomes mediated by trans-translation. Binds to transfer-messenger RNA (tmRNA), required for stable association of tmRNA with ribosomes. tmRNA and SmpB together mimic tRNA shape, replacing the anticodon stem-loop with SmpB. tmRNA is encoded by the ssrA gene; the 2 termini fold to resemble tRNA(Ala) and it encodes a 'tag peptide', a short internal open reading frame. During trans-translation Ala-aminoacylated tmRNA acts like a tRNA, entering the A-site of stalled ribosomes, displacing the stalled mRNA. The ribosome then switches to translate the ORF on the tmRNA; the nascent peptide is terminated with the 'tag peptide' encoded by the tmRNA and targeted for degradation. The ribosome is freed to recommence translation, which seems to be the essential function of trans-translation. The polypeptide is SsrA-binding protein (Pseudomonas aeruginosa (strain LESB58)).